A 325-amino-acid chain; its full sequence is ADP-ribose glycohydrolase MACROD1 (325 aa).

The segment at L21–A55 is disordered. An N6-succinyllysine mark is found at K96, K103, and K129. A Glycyl lysine isopeptide (Lys-Gly) (interchain with G-Cter in SUMO2) cross-link involves residue K138. In terms of domain architecture, Macro spans E141 to F322. G159–I161 lines the substrate pocket. N6-acetyllysine is present on K163. Substrate is bound by residues A172 to N174, G179 to D184, I267 to G273, and F306.

Belongs to the MacroD-type family. MacroD1/2-like subfamily. As to quaternary structure, interacts with ESR1; Interacts in a manner that is estrogen independent but is enhanced by estrogen. Interacts (via macro domain) with AR.

The protein resides in the nucleus. The catalysed reaction is 3''-O-acetyl-ADP-D-ribose + H2O = ADP-D-ribose + acetate + H(+). It carries out the reaction 2''-O-acetyl-ADP-D-ribose + H2O = ADP-D-ribose + acetate + H(+). It catalyses the reaction 4-O-(ADP-D-ribosyl)-L-aspartyl-[protein] + H2O = L-aspartyl-[protein] + ADP-D-ribose + H(+). The enzyme catalyses 5-O-(ADP-D-ribosyl)-L-glutamyl-[protein] + H2O = L-glutamyl-[protein] + ADP-D-ribose + H(+). The catalysed reaction is alpha-NAD(+) + H2O = ADP-D-ribose + nicotinamide + H(+). Its activity is regulated as follows. Subject to competitive inhibition by the product ADP-ribose. In terms of biological role, removes ADP-ribose from aspartate and glutamate residues in proteins bearing a single ADP-ribose moiety. Inactive towards proteins bearing poly-ADP-ribose. Deacetylates O-acetyl-ADP ribose, a signaling molecule generated by the deacetylation of acetylated lysine residues in histones and other proteins. Plays a role in estrogen signaling. Binds to androgen receptor (AR) and amplifies the transactivation function of AR in response to androgen. May play an important role in carcinogenesis and/or progression of hormone-dependent cancers by feed-forward mechanism that activates ESR1 transactivation. Could be an ESR1 coactivator, providing a positive feedback regulatory loop for ESR1 signal transduction. Could be involved in invasive growth by down-regulating CDH1 in endometrial cancer cells. Enhances ESR1-mediated transcription activity. The sequence is that of ADP-ribose glycohydrolase MACROD1 (MACROD1) from Bos taurus (Bovine).